Here is a 247-residue protein sequence, read N- to C-terminus: Aspartate/glutamate leucyltransferase (247 aa).

This sequence belongs to the R-transferase family. Bpt subfamily.

The protein localises to the cytoplasm. It carries out the reaction N-terminal L-glutamyl-[protein] + L-leucyl-tRNA(Leu) = N-terminal L-leucyl-L-glutamyl-[protein] + tRNA(Leu) + H(+). It catalyses the reaction N-terminal L-aspartyl-[protein] + L-leucyl-tRNA(Leu) = N-terminal L-leucyl-L-aspartyl-[protein] + tRNA(Leu) + H(+). Its function is as follows. Functions in the N-end rule pathway of protein degradation where it conjugates Leu from its aminoacyl-tRNA to the N-termini of proteins containing an N-terminal aspartate or glutamate. The sequence is that of Aspartate/glutamate leucyltransferase from Dechloromonas aromatica (strain RCB).